We begin with the raw amino-acid sequence, 475 residues long: Bifunctional protein HldE (475 aa).

The segment at 1-318 is ribokinase; it reads MKITLPEFGK…ANALYTEQET (318 aa). 195–198 provides a ligand contact to ATP; the sequence is NMSE. Asp-264 is an active-site residue. A cytidylyltransferase region spans residues 344–475; sequence MTNGCFDILH…DIIKTIRERG (132 aa).

It in the N-terminal section; belongs to the carbohydrate kinase PfkB family. In the C-terminal section; belongs to the cytidylyltransferase family. Homodimer.

It catalyses the reaction D-glycero-beta-D-manno-heptose 7-phosphate + ATP = D-glycero-beta-D-manno-heptose 1,7-bisphosphate + ADP + H(+). The catalysed reaction is D-glycero-beta-D-manno-heptose 1-phosphate + ATP + H(+) = ADP-D-glycero-beta-D-manno-heptose + diphosphate. It participates in nucleotide-sugar biosynthesis; ADP-L-glycero-beta-D-manno-heptose biosynthesis; ADP-L-glycero-beta-D-manno-heptose from D-glycero-beta-D-manno-heptose 7-phosphate: step 1/4. Its pathway is nucleotide-sugar biosynthesis; ADP-L-glycero-beta-D-manno-heptose biosynthesis; ADP-L-glycero-beta-D-manno-heptose from D-glycero-beta-D-manno-heptose 7-phosphate: step 3/4. In terms of biological role, catalyzes the phosphorylation of D-glycero-D-manno-heptose 7-phosphate at the C-1 position to selectively form D-glycero-beta-D-manno-heptose-1,7-bisphosphate. Catalyzes the ADP transfer from ATP to D-glycero-beta-D-manno-heptose 1-phosphate, yielding ADP-D-glycero-beta-D-manno-heptose. In Aeromonas salmonicida (strain A449), this protein is Bifunctional protein HldE.